The chain runs to 603 residues: MLRPVETPTREIKKLDGLWAFSLDRENCGIDQRWWESALQESRAIAVPGSFNDQFADADIRNYAGNVWYQREVFIPKGWAGQRIVLRFDAVTHYGKVWVNNQEVMEHQGGYTPFEADVTPYVIAGKSVRITVCVNNELNWQTIPPGMVITDENGKKKQSYFHDFFNYAGIHRSVMLYTTPNTWVDDITVVTHVAQDCNHASVDWQVVANGDVSVELRDADQQVVATGQGTSGTLQVVNPHLWQPGEGYLYELCVTAKSQTECDIYPLRVGIRSVAVKGEQFLINHKPFYFTGFGRHEDADLRGKGFDNVLMVHDHALMDWIGANSYRTSHYPYAEEMLDWADEHGIVVIDETAAVGFNLSLGIGFEAGNKPKELYSEEAVNGETQQAHLQAIKELIARDKNHPSVVMWSIANEPDTRPQGAREYFAPLAEATRKLDPTRPITCVNVMFCDAHTDTISDLFDVLCLNRYYGWYVQSGDLETAEKVLEKELLAWQEKLHQPIIITEYGVDTLAGLHSMYTDMWSEEYQCAWLDMYHRVFDRVSAVVGEQVWNFADFATSQGILRVGGNKKGIFTRDRKPKSAAFLLQKRWTGMNFGEKPQQGGKQ.

D-glucuronate is bound by residues Asp163 and Asn412. The active-site Proton donor is Glu413. The D-glucuronate site is built by Asn466, Tyr472, Glu504, Trp549, and Lys568. The active-site Nucleophile is Glu504. The N-K motif signature appears at 566–568 (NKK).

Belongs to the glycosyl hydrolase 2 family. As to quaternary structure, homotetramer.

It catalyses the reaction a beta-D-glucuronoside + H2O = D-glucuronate + an alcohol. The catalysed reaction is 4-methylumbelliferone beta-D-glucuronate + H2O = 4-methylumbelliferone + D-glucuronate. With respect to regulation, potently inhibited by a set of synthetic compounds like thio-urea derivatives and analogs, and uronic isofagomine (UIFG) derivatives. Inhibitors of gut microbial beta-glucuronidases block the reactivation of glucuronidated cancer drugs, and thereby alleviate drug-induced GI toxicity. Its function is as follows. Displays beta-glucuronidase activity with the artificial substrate p-nitrophenyl-beta-D-glucuronide (PNPG) and with 4-methylumbelliferyl-glucuronide. Is likely capable of scavenging glucuronate from a range of chemically distinct xenobiotic and endobiotic glucuronides present in the gastrointestinal (GI) tract, to be able to utilize these diverse sources of carbon. As part of the GI microbiome, this enzyme is able to reactivate glucuronide drug conjugates, such reactivated compounds can significantly damage the GI tract. This is Beta-glucuronidase (uidA) from Escherichia coli (strain K12).